A 658-amino-acid chain; its full sequence is Staphylocoagulase (658 aa).

The N-terminal stretch at 1–26 (MKKQIISLGALAVASSLFTWDNKADA) is a signal peptide. 4 stretches are compositionally biased toward polar residues: residues 391–406 (MEQN…TQPT), 428–440 (GTES…QGES), 499–514 (PSET…QDGT), and 521–531 (PTQNKPSETNA). Residues 391 to 531 (MEQNRPSLSD…TQNKPSETNA (141 aa)) form a disordered region. 6 tandem repeats follow at residues 492–518 (ARPR…VSYG), 519–545 (ARPT…VSYG), 546–572 (ARPT…VSYG), 573–599 (ARPT…VSYG), 600–626 (ARPT…VSYG), and 627–653 (ARPT…ATYG). The tract at residues 492–653 (ARPRFNKPSE…THADGTATYG (162 aa)) is 6 X 27 AA tandem repeats of A-R-P-[RT]-[FQY]-[NK]-K-P-S-[EK]-T-N-A-Y-N-V-T-T-[NH]-[QA]-[DN]-G-[TQ]-[VA]-[ST]-Y-G. Positions 619–658 (ANGQVSYGARPTQKKPSETNAYNVTTHADGTATYGPRVTK) are disordered. Polar residues predominate over residues 636–646 (ETNAYNVTTHA).

It belongs to the staphylocoagulase family.

In terms of biological role, staphylocoagulase is an extracellular protein which specifically forms a complex with human prothrombin. This complex named staphylothrombin can clot fibrinogen without any proteolytic cleavage of prothrombin. The chain is Staphylocoagulase from Staphylococcus aureus.